The sequence spans 250 residues: 5-oxoprolinase subunit A (250 aa).

Belongs to the LamB/PxpA family. In terms of assembly, forms a complex composed of PxpA, PxpB and PxpC.

It catalyses the reaction 5-oxo-L-proline + ATP + 2 H2O = L-glutamate + ADP + phosphate + H(+). Functionally, catalyzes the cleavage of 5-oxoproline to form L-glutamate coupled to the hydrolysis of ATP to ADP and inorganic phosphate. This is 5-oxoprolinase subunit A from Pseudomonas fluorescens (strain Pf0-1).